The sequence spans 489 residues: Rhamnulokinase (489 aa).

Alanine 13 to arginine 17 lines the ATP pocket. Residues cysteine 68 and cysteine 222 are joined by a disulfide bond. Residues glycine 83 and histidine 236–threonine 238 each bind substrate. The active-site Proton acceptor is aspartate 237. Residue threonine 259 participates in ATP binding. Asparagine 296 contacts substrate. Glutamine 304 provides a ligand contact to ATP. A disulfide bond links cysteine 353 and cysteine 370. Glycine 402 serves as a coordination point for ATP. A disulfide bridge links cysteine 413 with cysteine 417.

Belongs to the rhamnulokinase family. As to quaternary structure, monomer. It depends on Mg(2+) as a cofactor.

It catalyses the reaction L-rhamnulose + ATP = L-rhamnulose 1-phosphate + ADP + H(+). The protein operates within carbohydrate degradation; L-rhamnose degradation; glycerone phosphate from L-rhamnose: step 2/3. Its function is as follows. Involved in the catabolism of L-rhamnose (6-deoxy-L-mannose). Catalyzes the transfer of the gamma-phosphate group from ATP to the 1-hydroxyl group of L-rhamnulose to yield L-rhamnulose 1-phosphate. The chain is Rhamnulokinase from Escherichia coli O9:H4 (strain HS).